The following is a 130-amino-acid chain: UPF0102 protein AHA_3896 (130 aa).

The protein belongs to the UPF0102 family.

In Aeromonas hydrophila subsp. hydrophila (strain ATCC 7966 / DSM 30187 / BCRC 13018 / CCUG 14551 / JCM 1027 / KCTC 2358 / NCIMB 9240 / NCTC 8049), this protein is UPF0102 protein AHA_3896.